A 282-amino-acid polypeptide reads, in one-letter code: Pantothenate synthetase (282 aa).

Position 31-38 (31-38) interacts with ATP; sequence MGALHDGH. The Proton donor role is filled by His38. Gln62 is a binding site for (R)-pantoate. A beta-alanine-binding site is contributed by Gln62. 148-151 contributes to the ATP binding site; that stretch reads GKKD. Gln154 serves as a coordination point for (R)-pantoate. Residues Val177 and 185 to 188 contribute to the ATP site; that span reads KSSR.

This sequence belongs to the pantothenate synthetase family. In terms of assembly, homodimer.

Its subcellular location is the cytoplasm. The enzyme catalyses (R)-pantoate + beta-alanine + ATP = (R)-pantothenate + AMP + diphosphate + H(+). Its pathway is cofactor biosynthesis; (R)-pantothenate biosynthesis; (R)-pantothenate from (R)-pantoate and beta-alanine: step 1/1. Its function is as follows. Catalyzes the condensation of pantoate with beta-alanine in an ATP-dependent reaction via a pantoyl-adenylate intermediate. The polypeptide is Pantothenate synthetase (Staphylococcus saprophyticus subsp. saprophyticus (strain ATCC 15305 / DSM 20229 / NCIMB 8711 / NCTC 7292 / S-41)).